A 1371-amino-acid polypeptide reads, in one-letter code: MDPLNRSQLGPGCKTQAVVQKGPLDLIETGQGLKVQTDKPHLVSLGSGRLSTAITLLPLEEGRTVIGSAARDISLQGPGLAPEHCYIENLRGTLTLYPCGNACTIDGLPVRQPTRLTQGCMLCLGQSTFLRFNHPAEAKWMKSMIPAGVRAPGPTYNPGSAESESLVNGNHTAQPATRAPSACASHSSLVSSIEKDLQEIMDSLVLEEPGAAGKKPAATSPLSPMANGGRYLLSPPTSPGAMSVGSSYENTSPAFSPLSSPASSGSCASHSPSGQEPGPSVPPLVPARSSSYHLALQPPQSRPSGSRSSDSPRLGRKGGHERPPSPGLRGLLTDSPAATVLAEARRTTESPRLGGQLPVVAISLSEYPSSGARSQPASIPGSPKFQSPVPAPRNKIGTLQDRPPSPFREPPGTERVLTSSPSRQLVGRTFSDGLAATRTLQPPESPRLGRRGLDSMRELPPLSPSLSRRALSPLPARTAPDPKLSREVAESPRPRRWAAHGTSPEDFSLTLGARGRRTRSPSPTLGESLAPRKGSFSGRLSPAYSLGSLTGASPRQSPRAQRKLSSGDLRVPIPRERKNSITEISDNEDELLEYHRRQRQERLREQEMERLERQRLETILNLCAEYSRADGGPETGELPSIGEATAALALAGRRPSRGLAGAIVVSGRCGEESGGASQRLWESMERSDEENLKEECSSTESTQQEHEDAPGAKHQGEVLAVEEERAQVLGRVEQLKIRVKELEQQLQEAAREAEMERALLQGEREAERASLQKEQRAVDQLQEKLVALETGIQKDRDKEADALETETKLFEDLEFQQLERESRVEEERELAGQGLLRSKAELLRSVSKRKERLAVLDSQAGQIRAQAVQESERLAREKNAALQLLQKEKEKLNVLERRYHSLTGGRPFPKTTSTLKEMEKLLLPAVDLEQWYQELMSGLGTGLAAASPRSSPPPLPAKASRQLQVYRSKMDSDAASPLPRTRSGPLPSSSGSSSSSSQLSVATLGRSPSPKSALLAQNGTSSLPRNLAATLQDIETKRQLALQQKGHQVIEEQRRRLAELKQKAAAEAQCQWDALHGAGPFSAGPSGFPALMHHSILHHLPAGRERGEEGEHAYDTLSLESSDSMETSISTGGNSACSPDNMSSASGLDMGKIEEMEKMLKEAHAEKSRLMESREREMELRRQALEEERRRREQVERRLQSESARRQQLVEKEVKLREKQFSQARPLTRYLPNRKEDFDLKTHIESSGHGVDTCLHVVLSSKVCRGYLIKMGGKIKSWKKRWFVFDRLKRTLSYYVDKHETKLKGVIYFQAIEEVYYDHLRSAAKSPNPALTFCVKTHDRLYYMVAPSAEAMRIWMDVIVTGAEGYTQFMN.

Position 51 is a phosphoserine (serine 51). The FHA domain occupies 64 to 125; the sequence is TVIGSAARDI…LTQGCMLCLG (62 aa). Arginine 131 carries the post-translational modification Asymmetric dimethylarginine. The disordered stretch occupies residues 153 to 182; it reads GPTYNPGSAESESLVNGNHTAQPATRAPSA. The span at 157–175 shows a compositional bias: polar residues; sequence NPGSAESESLVNGNHTAQP. Phosphoserine occurs at positions 192, 220, and 223. Disordered regions lie at residues 211 to 336 and 368 to 573; these read AAGK…TDSP and PSSG…RVPI. 2 stretches are compositionally biased toward low complexity: residues 252 to 273 and 296 to 312; these read SPAFSPLSSPASSGSCASHSPS and LQPPQSRPSGSRSSDSP. A phosphoserine mark is found at serine 325 and serine 335. Residues 368–377 show a composition bias toward polar residues; that stretch reads PSSGARSQPA. Residues serine 382, serine 405, serine 431, serine 445, serine 463, serine 472, serine 491, and serine 503 each carry the phosphoserine modification. Positions 464–477 are enriched in low complexity; that stretch reads PSLSRRALSPLPAR. Residues 483–493 are compositionally biased toward basic and acidic residues; sequence KLSREVAESPR. Arginine 514 carries the post-translational modification Omega-N-methylarginine. Phosphoserine occurs at positions 520 and 522. Threonine 524 bears the Phosphothreonine mark. Serine 535, serine 541, serine 553, serine 557, serine 565, serine 580, serine 585, and serine 683 each carry phosphoserine. Positions 547–559 are enriched in polar residues; the sequence is GSLTGASPRQSPR. 2 disordered regions span residues 672–714 and 942–1020; these read ESGG…GAKH and GLAA…QNGT. Composition is skewed to basic and acidic residues over residues 682–696 and 703–714; these read ESMERSDEENLKEEC and QQEHEDAPGAKH. A coiled-coil region spans residues 688-798; sequence DEENLKEECS…ETGIQKDRDK (111 aa). Serine 976 and serine 1022 each carry phosphoserine. Low complexity predominate over residues 976–997; the sequence is SPLPRTRSGPLPSSSGSSSSSS. The disordered stretch occupies residues 1124–1143; the sequence is SMETSISTGGNSACSPDNMS. A coiled-coil region spans residues 1150–1216; the sequence is MGKIEEMEKM…QQLVEKEVKL (67 aa). The region spanning 1261–1364 is the PH domain; it reads SKVCRGYLIK…WMDVIVTGAE (104 aa).

This is Pleckstrin homology-like domain family B member 1 (Phldb1) from Mus musculus (Mouse).